The sequence spans 174 residues: CASP-like protein 1 (174 aa).

The tract at residues 1 to 25 (MDSKSGRSESAINIPESNSTKHKST) is disordered. Residues 1–46 (MDSKSGRSESAINIPESNSTKHKSTAVHTATKVAAVAPRGGGWRRG) lie on the Cytoplasmic side of the membrane. Positions 8–18 (SESAINIPESN) are enriched in polar residues. The chain crosses the membrane as a helical span at residues 47–67 (VSIFDFILRICALAAALAATA). Topologically, residues 68–96 (TMGTTDQTLPFFTQIIQFQASYDDLPVFT) are extracellular. A helical membrane pass occupies residues 97 to 117 (FFVVANGIASGYLVLSLPFSI). The Cytoplasmic portion of the chain corresponds to 118–119 (AT). Residues 120 to 139 (IVRPHAAAIKLLLIIFDTQF) traverse the membrane as a helical segment. At 140–150 (NDFCQRVSGAV) the chain is on the extracellular side. The chain crosses the membrane as a helical span at residues 151–171 (VASFVAAVILIFLVVLSAVAI). Residues 172-174 (RKH) lie on the Cytoplasmic side of the membrane.

Belongs to the Casparian strip membrane proteins (CASP) family. Homodimer and heterodimers.

It is found in the cell membrane. The chain is CASP-like protein 1 from Triphysaria pusilla (Dwarf owl's-clover).